Reading from the N-terminus, the 612-residue chain is Chaperone protein DnaK (612 aa).

A Phosphothreonine; by autocatalysis modification is found at threonine 173. The tract at residues 576 to 612 (AAKQAQAQQDGGAGAKKADDNVVDAEYEEVNDDKDQK) is disordered. The segment covering 596 to 612 (NVVDAEYEEVNDDKDQK) has biased composition (acidic residues).

This sequence belongs to the heat shock protein 70 family.

Acts as a chaperone. This chain is Chaperone protein DnaK, found in Bacillus licheniformis (strain ATCC 14580 / DSM 13 / JCM 2505 / CCUG 7422 / NBRC 12200 / NCIMB 9375 / NCTC 10341 / NRRL NRS-1264 / Gibson 46).